Here is a 205-residue protein sequence, read N- to C-terminus: Holliday junction branch migration complex subunit RuvA (205 aa).

The segment at 1–64 (MIGKLKGVVD…EDMIRLYGFR (64 aa)) is domain I. A domain II region spans residues 65–143 (SDAEREWFRL…AFAPVDPALI (79 aa)). The flexible linker stretch occupies residues 144–152 (RLAGAVEER). The interval 153–205 (TAPQPVADAISALVNLGYPQIQASAAVAAALQGAGEGAEAKTLIRLGLRELAR) is domain III.

The protein belongs to the RuvA family. As to quaternary structure, homotetramer. Forms an RuvA(8)-RuvB(12)-Holliday junction (HJ) complex. HJ DNA is sandwiched between 2 RuvA tetramers; dsDNA enters through RuvA and exits via RuvB. An RuvB hexamer assembles on each DNA strand where it exits the tetramer. Each RuvB hexamer is contacted by two RuvA subunits (via domain III) on 2 adjacent RuvB subunits; this complex drives branch migration. In the full resolvosome a probable DNA-RuvA(4)-RuvB(12)-RuvC(2) complex forms which resolves the HJ.

The protein resides in the cytoplasm. Functionally, the RuvA-RuvB-RuvC complex processes Holliday junction (HJ) DNA during genetic recombination and DNA repair, while the RuvA-RuvB complex plays an important role in the rescue of blocked DNA replication forks via replication fork reversal (RFR). RuvA specifically binds to HJ cruciform DNA, conferring on it an open structure. The RuvB hexamer acts as an ATP-dependent pump, pulling dsDNA into and through the RuvAB complex. HJ branch migration allows RuvC to scan DNA until it finds its consensus sequence, where it cleaves and resolves the cruciform DNA. The protein is Holliday junction branch migration complex subunit RuvA of Methylobacterium nodulans (strain LMG 21967 / CNCM I-2342 / ORS 2060).